A 254-amino-acid chain; its full sequence is Thiazole synthase (254 aa).

Catalysis depends on K95, which acts as the Schiff-base intermediate with DXP. Residues G156, 182 to 183, and 204 to 205 contribute to the 1-deoxy-D-xylulose 5-phosphate site; these read AG and NT.

Belongs to the ThiG family. As to quaternary structure, homotetramer. Forms heterodimers with either ThiH or ThiS.

The protein localises to the cytoplasm. It catalyses the reaction [ThiS sulfur-carrier protein]-C-terminal-Gly-aminoethanethioate + 2-iminoacetate + 1-deoxy-D-xylulose 5-phosphate = [ThiS sulfur-carrier protein]-C-terminal Gly-Gly + 2-[(2R,5Z)-2-carboxy-4-methylthiazol-5(2H)-ylidene]ethyl phosphate + 2 H2O + H(+). It participates in cofactor biosynthesis; thiamine diphosphate biosynthesis. Functionally, catalyzes the rearrangement of 1-deoxy-D-xylulose 5-phosphate (DXP) to produce the thiazole phosphate moiety of thiamine. Sulfur is provided by the thiocarboxylate moiety of the carrier protein ThiS. In vitro, sulfur can be provided by H(2)S. This Shewanella piezotolerans (strain WP3 / JCM 13877) protein is Thiazole synthase.